The primary structure comprises 188 residues: Threonylcarbamoyl-AMP synthase (188 aa).

The 185-residue stretch at 4-188 folds into the YrdC-like domain; it reads VENLQQAVDA…ARSLQVLRQG (185 aa).

It belongs to the SUA5 family. TsaC subfamily.

It localises to the cytoplasm. It carries out the reaction L-threonine + hydrogencarbonate + ATP = L-threonylcarbamoyladenylate + diphosphate + H2O. Required for the formation of a threonylcarbamoyl group on adenosine at position 37 (t(6)A37) in tRNAs that read codons beginning with adenine. Catalyzes the conversion of L-threonine, HCO(3)(-)/CO(2) and ATP to give threonylcarbamoyl-AMP (TC-AMP) as the acyladenylate intermediate, with the release of diphosphate. The sequence is that of Threonylcarbamoyl-AMP synthase from Vibrio cholerae serotype O1 (strain ATCC 39541 / Classical Ogawa 395 / O395).